Here is a 511-residue protein sequence, read N- to C-terminus: Limonoid UDP-glucosyltransferase (511 aa).

The active-site Proton acceptor is histidine 19. Histidine 19 contacts an anthocyanidin. Positions 344, 359, 362, 363, 364, and 367 each coordinate UDP-alpha-D-glucose. Glycine 382 contacts an anthocyanidin. The UDP-alpha-D-glucose site is built by aspartate 383 and glutamine 384.

It belongs to the UDP-glycosyltransferase family.

The catalysed reaction is limonin + UDP-alpha-D-glucose + H2O = limonin 17-beta-D-glucoside + UDP + 2 H(+). Its function is as follows. Involved in the glucosylation of limonoids. This chain is Limonoid UDP-glucosyltransferase, found in Citrus unshiu (Satsuma mandarin).